We begin with the raw amino-acid sequence, 422 residues long: Acyl-[acyl-carrier-protein] desaturase 6, chloroplastic (422 aa).

The N-terminal 46 residues, 1 to 46, are a transit peptide targeting the chloroplast; it reads MAATATMAMPLANRLRCKPNTNSSSPSRTLFGRRVTMISSSRWMCR. Fe cation is bound by residues Glu-154, Glu-192, His-195, Glu-245, Glu-280, and His-283.

This sequence belongs to the fatty acid desaturase type 2 family. In terms of assembly, homodimer. Requires Fe(2+) as cofactor.

The protein localises to the plastid. It is found in the chloroplast. Its pathway is lipid metabolism; fatty acid metabolism. Its function is as follows. Introduces a cis double bond in the acyl chain of an acyl-[acyl-carrier protein]. In Oryza sativa subsp. indica (Rice), this protein is Acyl-[acyl-carrier-protein] desaturase 6, chloroplastic.